We begin with the raw amino-acid sequence, 271 residues long: MDVIATTTTIVSDLDSRQPEIEAPIRIQPAKPISFSNGKRCHHHHLASEAVAVATYKECLKNHAAGIGGHALDGCGEFMPSPSFNSNDPASLTCAACGCHRNFHRREEDPSSLSAIVPAIEFRPHNRHQLPPPPPPHLAGIRSPDDDDSASPPPISSSYMLLALSGGRGGANTAVPMSRKRFRTKFSQYQKEKMFEFSERVGWRMPKADDVVVKEFCREIGVDKSVFKVWMHNNKISGRSGARRANGGVVVGGVGDSRQSVVPTNGSFSST.

Ser-16 carries the phosphoserine modification. The ZF-HD dimerization-type; degenerate zinc-finger motif lies at 56–107; sequence YKECLKNHAAGIGGHALDGCGEFMPSPSFNSNDPASLTCAACGCHRNFHRRE. The interval 125 to 154 is disordered; sequence HNRHQLPPPPPPHLAGIRSPDDDDSASPPP. The homeobox DNA-binding region spans 179–242; sequence RKRFRTKFSQ…NNKISGRSGA (64 aa).

As to quaternary structure, homo- and heterodimer with other ZFHD proteins. Interacts with MIF1, MIF2 and MIF3; these interactions prevent nuclear localization and DNA-binding to inhibit transcription regulation activity. Binds to ZHD1, ZHD2, ZHD4, ZHD10 and ZHD11. Interacts with HIPP30. Mostly expressed in flowers and inflorescence.

The protein resides in the nucleus. Putative transcription factor. This chain is Zinc-finger homeodomain protein 8 (ZHD8), found in Arabidopsis thaliana (Mouse-ear cress).